An 85-amino-acid polypeptide reads, in one-letter code: MSIFPIILALLLIGLDEGEALDGYPLSKNNYCKIYCPDEKVCKWSCKHRAGATNGKGDCINKGCYCYDVAPGTEMYPGRLPCNPY.

Residues 1 to 20 form the signal peptide; it reads MSIFPIILALLLIGLDEGEA. Residues 21 to 83 enclose the LCN-type CS-alpha/beta domain; that stretch reads LDGYPLSKNN…EMYPGRLPCN (63 aa). Cystine bridges form between Cys32–Cys82, Cys36–Cys59, Cys42–Cys64, and Cys46–Cys66.

As to expression, expressed by the venom gland.

The protein localises to the secreted. Beta toxins bind voltage-independently at site-4 of sodium channels (Nav) and shift the voltage of activation toward more negative potentials thereby affecting sodium channel activation and promoting spontaneous and repetitive firing. This chain is Toxin To6, found in Tityus obscurus (Amazonian scorpion).